The chain runs to 37 residues: Neuropeptide Y2-like conopeptide (37 aa).

A Tyrosine amide modification is found at Y37.

Belongs to the NPY family. In terms of tissue distribution, expressed by the venom duct.

The protein resides in the secreted. Its function is as follows. Causes hyperactivity such as jumping, rapid circling and tail flicking, after intraventicular injection into mouse brain. This chain is Neuropeptide Y2-like conopeptide, found in Conus betulinus (Beech cone).